The following is a 240-amino-acid chain: Heme oxygenase 1 (240 aa).

Residues Arg10, His17, Tyr125, Lys168, and Arg172 each coordinate heme b.

This sequence belongs to the heme oxygenase family.

It carries out the reaction heme b + 3 reduced [NADPH--hemoprotein reductase] + 3 O2 = biliverdin IXalpha + CO + Fe(2+) + 3 oxidized [NADPH--hemoprotein reductase] + 3 H2O + H(+). Its function is as follows. Catalyzes the opening of the heme ring with the release of iron. Key enzyme in the synthesis of the chromophoric part of the photosynthetic antennae. This Synechocystis sp. (strain ATCC 27184 / PCC 6803 / Kazusa) protein is Heme oxygenase 1 (pbsA1).